Consider the following 572-residue polypeptide: MRAISKLFVFTVLVLGSLQYYCGRYGACPAQIAVISHYTWPCTYAPAVRDKLGKASEWYGANAAPHVSVASGWMQGKVMPHLTKVSQWTEKHVQPRMRQAGADAIVTARVAWNVVQQYQRRHVVPLTGRLLAKCPCLERWAEQAARGWQWLCKHARALATAVQQQYPAFVAHMGGIWEPLHGAYNRIYLDLGRPVQEKTSEDASAAPGGTQYITSTITMTMTSLDELVTVTAEDGLSDVVEASFKDLVADEFSAWQQAIERKADSVLQAFTEEVGEFEMQQHEAVAPKFRALLKHISAKSQEHYAKINQAIRDINSTMELDPATNQTIWFDAHGTQLHQYITRPLMREYFSQANDELANITNHIRAELREVVDSVNGQVDVIRQEHIEVYEEWADVMVSEWSRRMAYIDVVDRDLEAEAERNRNWKRFLKLKKRVIKVRDQLLEHPVKFNQLETFLKEIQSTLRILAQENGEYLYILRSKANLSFQEREKNDRLREQHEQEAREMTLREQLSTELAANGTEVIIDTFEVDLDQLLRSNSTSWSVPPADARAEPASGSPIQQAASEAAQQPSV.

The N-terminal stretch at 1-19 is a signal peptide; that stretch reads MRAISKLFVFTVLVLGSLQ. 2 coiled-coil regions span residues 351-372 and 485-510; these read SQAN…REVV and FQER…LREQ. The disordered stretch occupies residues 539–572; the sequence is STSWSVPPADARAEPASGSPIQQAASEAAQQPSV. Residues 560-572 show a composition bias toward low complexity; it reads QQAASEAAQQPSV.

Belongs to the SHE10 family. In terms of assembly, component of the mitochondria-localized RNase mitochondrial RNA-processing (RNase MRP) composed of one single RNA encoded by the NME1 gene and at least 31 proteins. Absent in the nucleus-localized RNase MRP (NuMRP).

It is found in the mitochondrion. Its function is as follows. Involved in spore wall assembly. May be a component of the mitochondrial RNase MRP (MtMRP), a ribonucleoprotein endoribonuclease involved in the cleaving RNA transcripts to generate primers for DNA replication in mitochondria. The protein is Outer spore wall assembly protein SHE10 of Eremothecium gossypii (strain ATCC 10895 / CBS 109.51 / FGSC 9923 / NRRL Y-1056) (Yeast).